Here is a 291-residue protein sequence, read N- to C-terminus: MSNNNISTLSSVTISELLDAGIHYGHKASRWNPKMAPYIYGKRDDVHIINLDYTVSQIDVISKVIYKEIKEKNGRILFVDTRRHRDIVAQYAENCGQYYVTHRWLGGMLTNWVTVSKAINKLDQLEKKLADPEKIVGYTKREILSMQRMRDNLHRSFGGIRNMGGKPTLLIVMDINKDHIAVKEARREKIPIIAIVDTNSDPDLVDYPIPGNDDAIRSIRLYCKIFSDAVLLAIEHMLAASGVDLGAINGDNPSERLKAAKKITKMKLSKKVTKINVEQDQNKLEKDNKDL.

This sequence belongs to the universal ribosomal protein uS2 family.

In Orientia tsutsugamushi (strain Boryong) (Rickettsia tsutsugamushi), this protein is Small ribosomal subunit protein uS2.